A 60-amino-acid chain; its full sequence is Sec-independent protein translocase protein TatA (60 aa).

A helical transmembrane segment spans residues 1 to 21 (MTPAGPAQLLIVALVVIVLFG).

Belongs to the TatA/E family. The Tat system comprises two distinct complexes: a TatABC complex, containing multiple copies of TatA, TatB and TatC subunits, and a separate TatA complex, containing only TatA subunits. Substrates initially bind to the TatABC complex, which probably triggers association of the separate TatA complex to form the active translocon.

It is found in the cell membrane. Its function is as follows. Part of the twin-arginine translocation (Tat) system that transports large folded proteins containing a characteristic twin-arginine motif in their signal peptide across membranes. TatA could form the protein-conducting channel of the Tat system. The sequence is that of Sec-independent protein translocase protein TatA from Corynebacterium glutamicum (strain R).